The chain runs to 216 residues: Trimethylamine corrinoid protein 1 (216 aa).

The 92-residue stretch at 1–92 (MASKEEIIAK…EMEKRKSETK (92 aa)) folds into the B12-binding N-terminal domain. The region spanning 94-216 (LGTVVIGTIE…VVSKVRAVLL (123 aa)) is the B12-binding domain. Histidine 107 contacts methylcob(III)alamin.

This sequence belongs to the methylamine corrinoid protein family. Can form a complex with MttB.

Its pathway is one-carbon metabolism; methanogenesis from trimethylamine. Acts probably as a methyl group carrier between MttB and either MtbA or MtaA. The chain is Trimethylamine corrinoid protein 1 (mttC1) from Methanosarcina acetivorans (strain ATCC 35395 / DSM 2834 / JCM 12185 / C2A).